The primary structure comprises 87 residues: UPF0335 protein RHECIAT_CH0003797 (87 aa).

It belongs to the UPF0335 family.

The chain is UPF0335 protein RHECIAT_CH0003797 from Rhizobium etli (strain CIAT 652).